The primary structure comprises 381 residues: DNA primase DnaG (381 aa).

Residues 173–259 (DAILVVEGRS…EVEDLEKDEI (87 aa)) form the Toprim domain. 3 residues coordinate Mg(2+): Glu-179, Asp-221, and Asp-223.

This sequence belongs to the archaeal DnaG primase family. In terms of assembly, forms a ternary complex with MCM helicase and DNA. Component of the archaeal exosome complex. It depends on Mg(2+) as a cofactor.

The catalysed reaction is ssDNA + n NTP = ssDNA/pppN(pN)n-1 hybrid + (n-1) diphosphate.. Its function is as follows. RNA polymerase that catalyzes the synthesis of short RNA molecules used as primers for DNA polymerase during DNA replication. Also part of the exosome, which is a complex involved in RNA degradation. Acts as a poly(A)-binding protein that enhances the interaction between heteromeric, adenine-rich transcripts and the exosome. This Methanothermobacter thermautotrophicus (strain ATCC 29096 / DSM 1053 / JCM 10044 / NBRC 100330 / Delta H) (Methanobacterium thermoautotrophicum) protein is DNA primase DnaG.